The following is a 304-amino-acid chain: MTTLRIATRKSPLALWQSEHVATALRQHHPGLEVVLVPMSTRGDEVLDRSLAAIGGKGLFLKELELAMLRGEADCAVHSLKDVPMELDAPFVLPAILERGDPADALVSNLYATLQALPLGARVGTSSLRRQAQLRAARPDLELIDLRGNVNTRLAKLDNGGYDAIVLACAGLQRLGLEARITARLDAPEWLPAPAQGAVAVECRGDDARIHDLLAVLDAGRTRACVEAERAMNRALHGSCHVPVAAFARWEGEDLFLQGMVGSASDGRLIHAEAHGSPDATEDLGRRVADGLFEKGAAQLLAEL.

Position 240 is an S-(dipyrrolylmethanemethyl)cysteine (cysteine 240).

The protein belongs to the HMBS family. Monomer. The cofactor is dipyrromethane.

It carries out the reaction 4 porphobilinogen + H2O = hydroxymethylbilane + 4 NH4(+). The protein operates within porphyrin-containing compound metabolism; protoporphyrin-IX biosynthesis; coproporphyrinogen-III from 5-aminolevulinate: step 2/4. Functionally, tetrapolymerization of the monopyrrole PBG into the hydroxymethylbilane pre-uroporphyrinogen in several discrete steps. This Xanthomonas campestris pv. campestris (strain B100) protein is Porphobilinogen deaminase.